Here is a 665-residue protein sequence, read N- to C-terminus: Cinnamate reductase (665 aa).

Gln109 provides a ligand contact to FMN. Catalysis depends on Tyr182, which acts as the Proton donor. Residues Arg230, Arg319, and 341–342 (GR) contribute to the FMN site. The [4Fe-4S] cluster site is built by Cys365, Cys368, Cys372, and Cys384. FAD contacts are provided by Ala415, Glu434, Asn442, Lys452, and Ala479.

The protein in the N-terminal section; belongs to the NADH:flavin oxidoreductase/NADH oxidase family. Requires FMN as cofactor. It depends on FAD as a cofactor. [4Fe-4S] cluster is required as a cofactor.

It carries out the reaction 3-phenylpropanoate + NAD(+) = (E)-cinnamate + NADH + H(+). It functions in the pathway amino-acid degradation; L-phenylalanine degradation. Involved in the fermentation of L-phenylalanine via a Stickland reaction. Catalyzes the reduction of (E)-cinnamate to yield 3-phenylpropionate. The chain is Cinnamate reductase from Clostridium sporogenes (strain ATCC 7955 / DSM 767 / NBRC 16411 / NCIMB 8053 / NCTC 8594 / PA 3679).